A 558-amino-acid polypeptide reads, in one-letter code: Transcription factor RelB (558 aa).

Positions 1 to 11 (MPSRRAARESA) are enriched in basic and acidic residues. The disordered stretch occupies residues 1-21 (MPSRRAARESAPELGALGSSD). Ser-19 carries the phosphoserine modification. Residues 22 to 50 (LSSLSLTVSRTTDELEIIDEYIKENGFGL) are leucine-zipper. Residue Thr-84 is modified to Phosphothreonine. Residues 103–418 (PYLVITEQPK…ESKRRKKKPV (316 aa)) form the RHD domain. 2 short sequence motifs (nuclear localization signal) span residues 387–391 (KKRKR) and 411–416 (KRRKKK). The residue at position 552 (Ser-552) is a Phosphoserine.

Component of the NF-kappa-B RelB-p50 complex. Component of the NF-kappa-B RelB-p52 complex. Self-associates; the interaction seems to be transient and may prevent degradation allowing for heterodimer formation p50 or p52. Interacts with NFKB1/p50, NFKB2/p52 and NFKB2/p100. Interacts with NFKBID. Interacts with BMAL1 and the interaction is enhanced in the presence of CLOCK. Phosphorylation at 'Thr-103' and 'Ser-573' is followed by proteasomal degradation. As to expression, expressed in intestine, thymus and spleen. Undetectable in liver, bome marrow, kidney and testis.

It is found in the nucleus. The protein resides in the cytoplasm. The protein localises to the cytoskeleton. Its subcellular location is the microtubule organizing center. It localises to the centrosome. In terms of biological role, NF-kappa-B is a pleiotropic transcription factor which is present in almost all cell types and is involved in many biological processed such as inflammation, immunity, differentiation, cell growth, tumorigenesis and apoptosis. NF-kappa-B is a homo- or heterodimeric complex formed by the Rel-like domain-containing proteins RELA/p65, RELB, NFKB1/p105, NFKB1/p50, REL and NFKB2/p52. The dimers bind at kappa-B sites in the DNA of their target genes and the individual dimers have distinct preferences for different kappa-B sites that they can bind with distinguishable affinity and specificity. Different dimer combinations act as transcriptional activators or repressors, respectively. NF-kappa-B is controlled by various mechanisms of post-translational modification and subcellular compartmentalization as well as by interactions with other cofactors or corepressors. NF-kappa-B complexes are held in the cytoplasm in an inactive state complexed with members of the NF-kappa-B inhibitor (I-kappa-B) family. In a conventional activation pathway, I-kappa-B is phosphorylated by I-kappa-B kinases (IKKs) in response to different activators, subsequently degraded thus liberating the active NF-kappa-B complex which translocates to the nucleus. NF-kappa-B heterodimeric RelB-p50 and RelB-p52 complexes are transcriptional activators. RELB neither associates with DNA nor with RELA/p65 or REL. Stimulates promoter activity in the presence of NFKB2/p49. As a member of the NUPR1/RELB/IER3 survival pathway, may allow the development of pancreatic intraepithelial neoplasias. Regulates the circadian clock by repressing the transcriptional activator activity of the CLOCK-BMAL1 heterodimer in a CRY1/CRY2 independent manner. Increased repression of the heterodimer is seen in the presence of NFKB2/p52. Is required for both T and B lymphocyte maturation and function. The protein is Transcription factor RelB (Relb) of Mus musculus (Mouse).